Reading from the N-terminus, the 211-residue chain is Uracil phosphoribosyltransferase (211 aa).

Residues Arg78, Arg103, and 130 to 138 (DPMLATGNS) contribute to the 5-phospho-alpha-D-ribose 1-diphosphate site. Residues Ile193 and 198 to 200 (GDA) each bind uracil. Asp199 serves as a coordination point for 5-phospho-alpha-D-ribose 1-diphosphate.

The protein belongs to the UPRTase family. The cofactor is Mg(2+).

It catalyses the reaction UMP + diphosphate = 5-phospho-alpha-D-ribose 1-diphosphate + uracil. The protein operates within pyrimidine metabolism; UMP biosynthesis via salvage pathway; UMP from uracil: step 1/1. With respect to regulation, allosterically activated by GTP. Functionally, catalyzes the conversion of uracil and 5-phospho-alpha-D-ribose 1-diphosphate (PRPP) to UMP and diphosphate. This Acinetobacter baumannii (strain ATCC 17978 / DSM 105126 / CIP 53.77 / LMG 1025 / NCDC KC755 / 5377) protein is Uracil phosphoribosyltransferase.